The sequence spans 130 residues: Anti-adapter protein IraD (130 aa).

This sequence belongs to the GpW/Gp25 family. IraD subfamily. Interacts with RssB.

It is found in the cytoplasm. In terms of biological role, inhibits RpoS proteolysis by regulating RssB activity, thereby increasing the stability of the sigma stress factor RpoS during oxidative stress. Its effect on RpoS stability is due to its interaction with RssB, which probably blocks the interaction of RssB with RpoS, and the consequent delivery of the RssB-RpoS complex to the ClpXP protein degradation pathway. This chain is Anti-adapter protein IraD, found in Escherichia coli (strain K12 / MC4100 / BW2952).